The primary structure comprises 122 residues: Large ribosomal subunit protein uL14 (122 aa).

This sequence belongs to the universal ribosomal protein uL14 family. In terms of assembly, part of the 50S ribosomal subunit. Forms a cluster with proteins L3 and L19. In the 70S ribosome, L14 and L19 interact and together make contacts with the 16S rRNA in bridges B5 and B8.

Functionally, binds to 23S rRNA. Forms part of two intersubunit bridges in the 70S ribosome. The protein is Large ribosomal subunit protein uL14 of Chlorobaculum tepidum (strain ATCC 49652 / DSM 12025 / NBRC 103806 / TLS) (Chlorobium tepidum).